The chain runs to 218 residues: Probable septum site-determining protein MinC (218 aa).

Belongs to the MinC family. Interacts with MinD and FtsZ.

Functionally, cell division inhibitor that blocks the formation of polar Z ring septums. Rapidly oscillates between the poles of the cell to destabilize FtsZ filaments that have formed before they mature into polar Z rings. Prevents FtsZ polymerization. The polypeptide is Probable septum site-determining protein MinC (Moorella thermoacetica (strain ATCC 39073 / JCM 9320)).